Reading from the N-terminus, the 396-residue chain is Lipopolysaccharide assembly protein B (396 aa).

Residues 1-20 (MIELLFLLLPIAAAYGWYMG) form a helical membrane-spanning segment. Residues 21-396 (RRSAKKDQDD…IKPVSNQEHN (376 aa)) lie on the Cytoplasmic side of the membrane. 4 TPR repeats span residues 35–68 (LSRD…QEIE), 77–109 (FEAE…SPNY), 149–182 (ENAL…KPQE), and 221–254 (VRAS…NPDY). Cys364, Cys367, Cys378, and Cys381 together coordinate Fe cation.

It belongs to the LapB family.

It localises to the cell inner membrane. Modulates cellular lipopolysaccharide (LPS) levels by regulating LpxC, which is involved in lipid A biosynthesis. May act by modulating the proteolytic activity of FtsH towards LpxC. May also coordinate assembly of proteins involved in LPS synthesis at the plasma membrane. The protein is Lipopolysaccharide assembly protein B of Haemophilus influenzae (strain ATCC 51907 / DSM 11121 / KW20 / Rd).